Consider the following 572-residue polypeptide: Proline--tRNA ligase (572 aa).

This sequence belongs to the class-II aminoacyl-tRNA synthetase family. ProS type 1 subfamily. As to quaternary structure, homodimer.

It is found in the cytoplasm. The catalysed reaction is tRNA(Pro) + L-proline + ATP = L-prolyl-tRNA(Pro) + AMP + diphosphate. Its function is as follows. Catalyzes the attachment of proline to tRNA(Pro) in a two-step reaction: proline is first activated by ATP to form Pro-AMP and then transferred to the acceptor end of tRNA(Pro). As ProRS can inadvertently accommodate and process non-cognate amino acids such as alanine and cysteine, to avoid such errors it has two additional distinct editing activities against alanine. One activity is designated as 'pretransfer' editing and involves the tRNA(Pro)-independent hydrolysis of activated Ala-AMP. The other activity is designated 'posttransfer' editing and involves deacylation of mischarged Ala-tRNA(Pro). The misacylated Cys-tRNA(Pro) is not edited by ProRS. The sequence is that of Proline--tRNA ligase from Escherichia coli O9:H4 (strain HS).